We begin with the raw amino-acid sequence, 292 residues long: Probable ABC transporter phosphonate/phosphite binding protein PhnD2 (292 aa).

A signal peptide spans 1 to 20 (MKLKSLLSVFTISIVALTSA). A lipid anchor (N-palmitoyl cysteine) is attached at cysteine 21. Cysteine 21 carries the S-diacylglycerol cysteine lipid modification.

It belongs to the phosphate/phosphite/phosphonate binding protein family. In terms of assembly, the complex may be composed of two ATP-binding proteins (PhnC2), two transmembrane proteins (PhnE2) and a solute-binding protein (PhnD2).

It is found in the cell membrane. Functionally, probably part of the ABC transporter complex PhnC2D2E2. Binds strongly to methylphosphonate (MPn), ethylphosphonate (EPn) and inorganic phosphite. In Prochlorococcus marinus (strain MIT 9301), this protein is Probable ABC transporter phosphonate/phosphite binding protein PhnD2.